Reading from the N-terminus, the 635-residue chain is ATP-dependent zinc metalloprotease FtsH (635 aa).

The Cytoplasmic portion of the chain corresponds to 1-4 (MVKN). The chain crosses the membrane as a helical span at residues 5–25 (LVLWVVVAVIMMTAYQSFNSS). Topologically, residues 26–97 (SVENSTDYTT…VEGTPFERRG (72 aa)) are periplasmic. Residues 98 to 118 (FLSQILISWFPMLFLVGVWVF) form a helical membrane-spanning segment. The Cytoplasmic portion of the chain corresponds to 119 to 635 (FMRQMQGGGG…AVENTDDFNV (517 aa)). An ATP-binding site is contributed by 191-198 (GPPGTGKT). A Zn(2+)-binding site is contributed by H413. Residue E414 is part of the active site. H417 and D491 together coordinate Zn(2+). The interval 593–635 (NREPVTPPSGWGEPKTQQAAYANSTTNDTKPESAVENTDDFNV) is disordered. Residues 607–620 (KTQQAAYANSTTND) are compositionally biased toward polar residues.

The protein in the central section; belongs to the AAA ATPase family. It in the C-terminal section; belongs to the peptidase M41 family. Homohexamer. Zn(2+) serves as cofactor.

Its subcellular location is the cell inner membrane. Its function is as follows. Acts as a processive, ATP-dependent zinc metallopeptidase for both cytoplasmic and membrane proteins. Plays a role in the quality control of integral membrane proteins. The polypeptide is ATP-dependent zinc metalloprotease FtsH (Haemophilus influenzae (strain ATCC 51907 / DSM 11121 / KW20 / Rd)).